The sequence spans 925 residues: Nuclear factor of activated T-cells, cytoplasmic 2 (925 aa).

The interval 1-95 is disordered; it reads MNAPERQPQP…FGEPDRVGPQ (95 aa). Ser23 is subject to Phosphoserine. The 9aaTAD signature appears at 26-34; the sequence is DELDFSILF. Ser99, Ser107, and Ser110 each carry phosphoserine. The calcineurin-binding stretch occupies residues 111–116; sequence PRIEIT. Residues 119–199 form a transactivation domain A (TAD-A) region; it reads HELIQAVGPL…CVSPNNGGPD (81 aa). 8 positions are modified to phosphoserine: Ser148, Ser168, Ser171, Ser172, Ser174, Ser175, Ser177, and Ser180. Residues 161–175 form a required for cytoplasmic retention of the phosphorylated form region; the sequence is YREPLCLSPASSGSS. Tandem repeats lie at residues 184–200 and 213–229. The interval 184–286 is 3 X approximate SP repeats; it reads SPYTSPCVSP…PQPSSHVAPQ (103 aa). A disordered region spans residues 195-297; the sequence is NGGPDDLCPQ…HGSPAGYPPV (103 aa). Ser213, Ser217, Ser221, Ser236, and Ser243 each carry phosphoserine. Residues 214-224 show a composition bias toward polar residues; that stretch reads PRTSPIMSPRT. Positions 251–253 match the Nuclear localization signal motif; that stretch reads KRR. A phosphoserine mark is found at Ser255, Ser268, Ser274, Ser276, Ser280, Ser326, Ser330, and Ser363. The segment covering 264-281 has biased composition (low complexity); sequence PPGASPQRSRSPSPQPSS. The 3; approximate repeat unit spans residues 272 to 286; that stretch reads SRSPSPQPSSHVAPQ. In terms of domain architecture, RHD spans 392-574; sequence ASLPPLEWPL…NPIECSQRSA (183 aa). Residues 421-428 mediate DNA binding; that stretch reads RAHYETEG. A Nuclear localization signal motif is present at residues 664–666; the sequence is KRK. Ser755, Ser757, Ser759, Ser856, and Ser859 each carry phosphoserine. The disordered stretch occupies residues 839 to 894; sequence PGTTRPGPPPVSQGQRLSPGSYPTVIQQQNATSQRAAKNGPPVSDQKEVLPAGVTI. Over residues 862-874 the composition is skewed to polar residues; it reads TVIQQQNATSQRA. The Nuclear export signal motif lies at 904–913; the sequence is YLDDVNEIIR.

In terms of assembly, member of the multicomponent NFATC transcription complex that consists of at least two components, a pre-existing cytoplasmic component NFATC2 and an inducible nuclear component NFATC1. Other members such as NFATC4, NFATC3 or members of the activating protein-1 family, MAF, GATA4 and Cbp/p300 can also bind the complex. The phosphorylated form specifically interacts with XPO1; which mediates nuclear export. NFATC proteins bind to DNA as monomers. Interacts with NFATC2IP. Interacts with FOXP3. Interacts with TBX21 ('Thr-303' phosphorylated form). Interacts with KAT2A. Interacts with HOMER2 and HOMER3; this interaction competes with calcineurin/PPP3CA-binding and hence prevents NFATC2 dephosphorylation and activation. Interacts with protein phosphatase PPP3CA/calcineurin A. Interacts with AKAP5 (via leucine zipper domain); this is required for NFATC2/NFAT1 recruitment to CRAC channels. Post-translationally, in resting cells, phosphorylated by NFATC-kinase on at least 18 sites in the 99-363 region. Upon cell stimulation, all these sites except Ser-243 are dephosphorylated by calcineurin. Dephosphorylation induces a conformational change that simultaneously exposes an NLS and masks an NES, which results in nuclear localization. Simultaneously, Ser-53 or Ser-56 is phosphorylated; which is required for full transcriptional activity. Ubiquitinated in endothelial cells by RNF213 downstream of the non-canonical Wnt signaling pathway, leading to its degradation by the proteasome. In terms of tissue distribution, expressed in thymus, spleen, heart, testis, brain, placenta, muscle and pancreas. Isoform 1 is highly expressed in the small intestine, heart, testis, prostate, thymus, placenta and thyroid. Isoform 3 is highly expressed in stomach, uterus, placenta, trachea and thyroid.

It localises to the cytoplasm. Its subcellular location is the nucleus. In terms of biological role, plays a role in the inducible expression of cytokine genes in T-cells, especially in the induction of the IL-2, IL-3, IL-4, TNF-alpha or GM-CSF. Promotes invasive migration through the activation of GPC6 expression and WNT5A signaling pathway. Is involved in the negative regulation of chondrogenesis. Recruited by AKAP5 to ORAI1 pore-forming subunit of CRAC channels in Ca(2+) signaling microdomains where store-operated Ca(2+) influx is coupled to calmodulin and calcineurin signaling and activation of NFAT-dependent transcriptional responses. The sequence is that of Nuclear factor of activated T-cells, cytoplasmic 2 (NFATC2) from Homo sapiens (Human).